The sequence spans 411 residues: Na(+)-translocating NADH-quinone reductase subunit B (411 aa).

Transmembrane regions (helical) follow at residues Met56–Gly76, Ala120–Trp140, and Ile166–Val186. Thr233 is subject to FMN phosphoryl threonine. 5 helical membrane-spanning segments follow: residues Val272 to Trp292, Ile294 to Ser314, Met319 to Phe339, Ser348 to Ile368, and Gly378 to Val398.

Belongs to the NqrB/RnfD family. As to quaternary structure, composed of six subunits; NqrA, NqrB, NqrC, NqrD, NqrE and NqrF. FMN serves as cofactor.

Its subcellular location is the cell inner membrane. The catalysed reaction is a ubiquinone + n Na(+)(in) + NADH + H(+) = a ubiquinol + n Na(+)(out) + NAD(+). Functionally, NQR complex catalyzes the reduction of ubiquinone-1 to ubiquinol by two successive reactions, coupled with the transport of Na(+) ions from the cytoplasm to the periplasm. NqrA to NqrE are probably involved in the second step, the conversion of ubisemiquinone to ubiquinol. The polypeptide is Na(+)-translocating NADH-quinone reductase subunit B (Haemophilus influenzae (strain 86-028NP)).